Here is a 187-residue protein sequence, read N- to C-terminus: Large ribosomal subunit protein bL12cx (187 aa).

The transit peptide at 1–54 (MASTTLSIATTIRSSSPLTSASTHHFLSKPTAIEFPFRLSSSSSHRAINLRPIS) directs the protein to the chloroplast.

Belongs to the bacterial ribosomal protein bL12 family.

The protein resides in the plastid. Its subcellular location is the chloroplast. The sequence is that of Large ribosomal subunit protein bL12cx (RPL12C) from Arabidopsis thaliana (Mouse-ear cress).